The primary structure comprises 518 residues: Chromosomal replication initiator protein DnaA (518 aa).

Residues 1–72 are domain I, interacts with DnaA modulators; sequence MTLAEFWPLC…VREELAAGRS (72 aa). The segment at 72–180 is domain II; the sequence is SAFVFKPGEG…DAEEARYEQT (109 aa). The tract at residues 145–178 is disordered; that stretch reads EPRQAAGSASRPESAAVAKARTDAQRDAEEARYE. A compositionally biased stretch (basic and acidic residues) spans 164–177; the sequence is ARTDAQRDAEEARY. The segment at 181 to 397 is domain III, AAA+ region; sequence NLSPDYTFDT…GAFNRVGASS (217 aa). Gly-225, Gly-227, Lys-228, and Thr-229 together coordinate ATP. The segment at 398–518 is domain IV, binds dsDNA; the sequence is RFMNRPVIDI…YEKLLILIQN (121 aa).

Belongs to the DnaA family. In terms of assembly, oligomerizes as a right-handed, spiral filament on DNA at oriC.

It localises to the cytoplasm. In terms of biological role, plays an essential role in the initiation and regulation of chromosomal replication. ATP-DnaA binds to the origin of replication (oriC) to initiate formation of the DNA replication initiation complex once per cell cycle. Binds the DnaA box (a 9 base pair repeat at the origin) and separates the double-stranded (ds)DNA. Forms a right-handed helical filament on oriC DNA; dsDNA binds to the exterior of the filament while single-stranded (ss)DNA is stabiized in the filament's interior. The ATP-DnaA-oriC complex binds and stabilizes one strand of the AT-rich DNA unwinding element (DUE), permitting loading of DNA polymerase. After initiation quickly degrades to an ADP-DnaA complex that is not apt for DNA replication. Binds acidic phospholipids. This chain is Chromosomal replication initiator protein DnaA, found in Neisseria meningitidis serogroup A / serotype 4A (strain DSM 15465 / Z2491).